Reading from the N-terminus, the 299-residue chain is ATP phosphoribosyltransferase (299 aa).

It belongs to the ATP phosphoribosyltransferase family. Long subfamily. The cofactor is Mg(2+).

Its subcellular location is the cytoplasm. The catalysed reaction is 1-(5-phospho-beta-D-ribosyl)-ATP + diphosphate = 5-phospho-alpha-D-ribose 1-diphosphate + ATP. It participates in amino-acid biosynthesis; L-histidine biosynthesis; L-histidine from 5-phospho-alpha-D-ribose 1-diphosphate: step 1/9. Feedback inhibited by histidine. Its function is as follows. Catalyzes the condensation of ATP and 5-phosphoribose 1-diphosphate to form N'-(5'-phosphoribosyl)-ATP (PR-ATP). Has a crucial role in the pathway because the rate of histidine biosynthesis seems to be controlled primarily by regulation of HisG enzymatic activity. This Campylobacter lari (strain RM2100 / D67 / ATCC BAA-1060) protein is ATP phosphoribosyltransferase.